A 267-amino-acid polypeptide reads, in one-letter code: Small ribosomal subunit protein uS2 (267 aa).

The interval 224–267 (GRQGEDQVDEKTFEGQKSEAAEGDKKTADNSMEDIVNAVEGDNK) is disordered. Residues 225-251 (RQGEDQVDEKTFEGQKSEAAEGDKKTA) show a composition bias toward basic and acidic residues.

This sequence belongs to the universal ribosomal protein uS2 family.

The polypeptide is Small ribosomal subunit protein uS2 (Levilactobacillus brevis (strain ATCC 367 / BCRC 12310 / CIP 105137 / JCM 1170 / LMG 11437 / NCIMB 947 / NCTC 947) (Lactobacillus brevis)).